The primary structure comprises 535 residues: Expansin-like protein 9 (535 aa).

The first 25 residues, 1 to 25, serve as a signal peptide directing secretion; sequence MKINKNNYFKIIIFIIYVIINLINA. N-linked (GlcNAc...) asparagine glycosylation occurs at Asn24. Over 26–514 the chain is Extracellular; sequence SDNVKLSNCG…DNSSNILLFS (489 aa). The 114-residue stretch at 31 to 144 folds into the Expansin-like EG45 domain; sequence LSNCGQARAE…QEVSCGFLGN (114 aa). Cystine bridges form between Cys34-Cys75 and Cys78-Cys139. 3 N-linked (GlcNAc...) asparagine glycosylation sites follow: Asn122, Asn257, and Asn292. The disordered stretch occupies residues 459–487; it reads VDGSSNDDDGTGGTGGGASNKVGKRVDGE. Asn506 carries an N-linked (GlcNAc...) asparagine glycan. Residues 515 to 535 form a helical membrane-spanning segment; sequence FNITLTFLLLSLIINILLLLF.

The protein belongs to the expansin family. Expansin A subfamily.

It is found in the membrane. In terms of biological role, may serve to lubricate the movement of the cellulose microfibrils during cell growth and wall extension and/or may serve to maintain the fluid state of the slug cell wall. This is Expansin-like protein 9 (expl9) from Dictyostelium discoideum (Social amoeba).